Consider the following 292-residue polypeptide: Nitrogenase iron protein 2 (292 aa).

Position 12 to 19 (12 to 19 (GKGGIGKS)) interacts with ATP. Cysteine 97 contacts [4Fe-4S] cluster. An ADP-ribosylarginine; by dinitrogenase reductase ADP-ribosyltransferase modification is found at arginine 100. Cysteine 133 contributes to the [4Fe-4S] cluster binding site.

It belongs to the NifH/BchL/ChlL family. As to quaternary structure, homodimer. It depends on [4Fe-4S] cluster as a cofactor. In terms of processing, the reversible ADP-ribosylation of Arg-100 inactivates the nitrogenase reductase and regulates nitrogenase activity.

It carries out the reaction N2 + 8 reduced [2Fe-2S]-[ferredoxin] + 16 ATP + 16 H2O = H2 + 8 oxidized [2Fe-2S]-[ferredoxin] + 2 NH4(+) + 16 ADP + 16 phosphate + 6 H(+). The key enzymatic reactions in nitrogen fixation are catalyzed by the nitrogenase complex, which has 2 components: the iron protein and the molybdenum-iron protein. The sequence is that of Nitrogenase iron protein 2 (nifH2) from Paenibacillus durus (Paenibacillus azotofixans).